The primary structure comprises 270 residues: Phospholysine phosphohistidine inorganic pyrophosphate phosphatase (270 aa).

Residues Asp-17 and Ser-19 each coordinate Mg(2+). Substrate is bound by residues 17-19, 54-55, and Lys-189; these read DIS and TN. Asp-214 lines the Mg(2+) pocket.

The protein belongs to the HAD-like hydrolase superfamily. Homodimer. Requires Mg(2+) as cofactor.

It localises to the cytoplasm. Its subcellular location is the nucleus. It carries out the reaction diphosphate + H2O = 2 phosphate + H(+). Functionally, phosphatase that hydrolyzes imidodiphosphate, 3-phosphohistidine and 6-phospholysine. Has broad substrate specificity and can also hydrolyze inorganic diphosphate, but with lower efficiency. This Rattus norvegicus (Rat) protein is Phospholysine phosphohistidine inorganic pyrophosphate phosphatase (Lhpp).